The sequence spans 188 residues: MYPLFETLCIENGKIQNINLHQVRYERSLREYYGKSAVKIFNLFSLIQLPTPLQNQLIRCRIDYNAETTQIQYFEYQRKIYRTFQPVICDDIEYSLKYSDRSLINTLFAQRGACDEIMIIKNGKVTDCSIGNLIFRQGKKWYTPDTPLLLGTQREKLLQEGKIQERTIFQEDIVNFDEIKIINAMNGL.

This is an uncharacterized protein from Haemophilus influenzae (strain ATCC 51907 / DSM 11121 / KW20 / Rd).